The chain runs to 479 residues: GTPase Obg (479 aa).

The 158-residue stretch at 2-159 folds into the Obg domain; it reads PRFVDRVVIH…RDLTLELKTV (158 aa). The 181-residue stretch at 160–340 folds into the OBG-type G domain; the sequence is ADVGLVGFPS…LIFGLSQMIS (181 aa). Residues 166-173, 191-195, 212-215, 292-295, and 321-323 contribute to the GTP site; these read GFPSAGKS, FTTLV, DVPG, NKID, and STA. Mg(2+) is bound by residues S173 and T193. The OCT domain maps to 358-436; the sequence is PIPVDDSGFT…IGEMTFDWEP (79 aa). Residues 434-479 form a disordered region; the sequence is WEPQTPAGEPVAMSGRGTDPRLDSNKRVGAAERKAARSRRREHGDG. The span at 451-468 shows a compositional bias: basic and acidic residues; sequence TDPRLDSNKRVGAAERKA. The segment covering 469–479 has biased composition (basic residues); that stretch reads ARSRRREHGDG.

The protein belongs to the TRAFAC class OBG-HflX-like GTPase superfamily. OBG GTPase family. Monomer. Requires Mg(2+) as cofactor.

Its subcellular location is the cytoplasm. Its function is as follows. An essential GTPase which binds GTP, GDP and possibly (p)ppGpp with moderate affinity, with high nucleotide exchange rates and a fairly low GTP hydrolysis rate. Plays a role in control of the cell cycle, stress response, ribosome biogenesis and in those bacteria that undergo differentiation, in morphogenesis control. The polypeptide is GTPase Obg (Mycobacterium tuberculosis (strain ATCC 25177 / H37Ra)).